A 558-amino-acid chain; its full sequence is Vanin-like protein 1 (558 aa).

The signal sequence occupies residues 1–22 (MSNTWWWLSVVLLILGLMPGMS). In terms of domain architecture, CN hydrolase spans 33 to 299 (YTAGVVEFKQ…RAIYVAQVPK (267 aa)). N-linked (GlcNAc...) asparagine glycosylation occurs at Asn-65. Glu-76 (proton acceptor) is an active-site residue. N-linked (GlcNAc...) asparagine glycosylation is found at Asn-103, Asn-120, and Asn-128. Lys-171 (proton donor) is an active-site residue. A glycan (N-linked (GlcNAc...) asparagine) is linked at Asn-180. The Nucleophile role is filled by Cys-203. Asn-354 and Asn-379 each carry an N-linked (GlcNAc...) asparagine glycan. Ser-531 is lipidated: GPI-anchor amidated serine. Residues 532-558 (GSPGLRILGGWLAMPLIILAIARTMSS) constitute a propeptide, removed in mature form.

It belongs to the carbon-nitrogen hydrolase superfamily. BTD/VNN family. As to expression, expressed in larvae and early pupae. Expressed in third instar larvae.

It localises to the cell membrane. This chain is Vanin-like protein 1, found in Drosophila melanogaster (Fruit fly).